The sequence spans 212 residues: Metalloproteinase inhibitor 3 (212 aa).

An N-terminal signal peptide occupies residues 1–24 (MTAWLGFLAVFLCSWSLRDLVAEA). Position 25 (cysteine 25) interacts with Zn(2+). Involved in metalloproteinase-binding stretches follow at residues 25–28 (CTCV) and 89–90 (ES). Cystine bridges form between cysteine 25–cysteine 92, cysteine 27–cysteine 119, cysteine 37–cysteine 144, cysteine 146–cysteine 193, cysteine 151–cysteine 156, and cysteine 164–cysteine 185. The 120-residue stretch at 25–144 (CTCVPIHPQD…GLNHRYHLGC (120 aa)) folds into the NTR domain.

The protein belongs to the protease inhibitor I35 (TIMP) family.

The protein resides in the secreted. The protein localises to the extracellular space. It localises to the extracellular matrix. Complexes with metalloproteinases (such as collagenases) and irreversibly inactivates them by binding to their catalytic zinc cofactor. May form part of a tissue-specific acute response to remodeling stimuli. The chain is Metalloproteinase inhibitor 3 (TIMP3) from Gallus gallus (Chicken).